Consider the following 173-residue polypeptide: Co-chaperone protein HscB homolog (173 aa).

Residues 5–77 (CHFALFELKP…PKRARYLLAM (73 aa)) enclose the J domain.

The protein belongs to the HscB family. Interacts with HscA and stimulates its ATPase activity.

Co-chaperone involved in the maturation of iron-sulfur cluster-containing proteins. Seems to help targeting proteins to be folded toward HscA. This is Co-chaperone protein HscB homolog from Pseudomonas syringae pv. tomato (strain ATCC BAA-871 / DC3000).